Here is a 302-residue protein sequence, read N- to C-terminus: Putative thiol protease R355 (302 aa).

Residues histidine 182 and aspartate 199 contribute to the active site. Catalysis depends on cysteine 244, which acts as the Nucleophile.

Belongs to the peptidase C48 family.

Its subcellular location is the virion. This is Putative thiol protease R355 from Acanthamoeba polyphaga mimivirus (APMV).